The chain runs to 231 residues: MSEKIVVVDDEKEIADLVTTFLQNEGFSVQPFYDGTSAIAYIEKEAIDLAVLDVMLPDIDGFQLLQQIRKTHFFPVLMLTAKGEDLDKITGLSLGADDYVTKPFNPLEVVARVKTQLRRYQRYNHSTASPTVEEYEKDGLILKINSHQCILYGKEVFLTPIEFKILLYLFEHQGSVVSSETLFEAVWKEKYLDNNNTVMAHIARLREKLHEEPRKPKLIKTVWGVGYIIEK.

Residues 4 to 117 (KIVVVDDEKE…EVVARVKTQL (114 aa)) enclose the Response regulatory domain. The residue at position 53 (Asp-53) is a 4-aspartylphosphate. A DNA-binding region (ompR/PhoB-type) is located at residues 132-231 (VEEYEKDGLI…VWGVGYIIEK (100 aa)).

In terms of processing, phosphorylated by VanSc.

It is found in the cytoplasm. In terms of biological role, member of the two-component regulatory system VanSc/VanRc. Binds to the promoter regions of target genes. Activates the transcription of vanC1 and vanXYC in response to vancomycin which results in vancomycin resistance. In Enterococcus gallinarum, this protein is Regulatory protein VanRc.